The following is a 1622-amino-acid chain: WD repeat-containing protein 97 (1622 aa).

6 WD repeats span residues 187–233 (SEQG…RRLV), 290–329 (LHKT…RMVF), 331–370 (GHTG…QVGE), 552–592 (ELRC…TVFQ), 594–633 (EAHS…EESL), and 687–726 (DPTD…LRLL). 2 disordered regions span residues 1090-1112 (GEKP…EDEE) and 1453-1472 (LHPA…EETD). The stretch at 1094-1118 (GEEGEEDKKEEEEEKEDEELDWALA) forms a coiled coil. Acidic residues predominate over residues 1096 to 1112 (EGEEDKKEEEEEKEDEE).

The chain is WD repeat-containing protein 97 from Homo sapiens (Human).